The following is a 361-amino-acid chain: tRNA/tmRNA (uracil-C(5))-methyltransferase (361 aa).

Positions 183, 211, 216, 232, and 294 each coordinate S-adenosyl-L-methionine. Cys319 (nucleophile) is an active-site residue. Glu353 functions as the Proton acceptor in the catalytic mechanism.

This sequence belongs to the class I-like SAM-binding methyltransferase superfamily. RNA M5U methyltransferase family. TrmA subfamily.

The catalysed reaction is uridine(54) in tRNA + S-adenosyl-L-methionine = 5-methyluridine(54) in tRNA + S-adenosyl-L-homocysteine + H(+). It carries out the reaction uridine(341) in tmRNA + S-adenosyl-L-methionine = 5-methyluridine(341) in tmRNA + S-adenosyl-L-homocysteine + H(+). Functionally, dual-specificity methyltransferase that catalyzes the formation of 5-methyluridine at position 54 (m5U54) in all tRNAs, and that of position 341 (m5U341) in tmRNA (transfer-mRNA). This is tRNA/tmRNA (uracil-C(5))-methyltransferase from Acinetobacter baumannii (strain ACICU).